A 207-amino-acid chain; its full sequence is Large ribosomal subunit protein uL4 (207 aa).

Positions Glu53–Gly85 are disordered.

The protein belongs to the universal ribosomal protein uL4 family. In terms of assembly, part of the 50S ribosomal subunit.

One of the primary rRNA binding proteins, this protein initially binds near the 5'-end of the 23S rRNA. It is important during the early stages of 50S assembly. It makes multiple contacts with different domains of the 23S rRNA in the assembled 50S subunit and ribosome. Its function is as follows. Forms part of the polypeptide exit tunnel. This chain is Large ribosomal subunit protein uL4, found in Novosphingobium aromaticivorans (strain ATCC 700278 / DSM 12444 / CCUG 56034 / CIP 105152 / NBRC 16084 / F199).